A 320-amino-acid chain; its full sequence is Glucokinase (320 aa).

This sequence belongs to the ROK (NagC/XylR) family. As to quaternary structure, monomer. A divalent metal cation serves as cofactor.

It carries out the reaction D-glucose + ATP = D-glucose 6-phosphate + ADP + H(+). Catalyzes the phosphorylation of D-glucose to D-glucose 6-phosphate using ATP as the phosphate donor. ITP can also serve as an effective phosphoryl donor. According to Hansen et al., the enzyme has a broad hexose specificity, and in addition to glucose, which shows the highest catalytic efficiency, it can also phosphorylate fructose, mannose, glucosamine, N-acetylglucosamine, N-acetylmannosamine and 2-deoxyglucose. However, according to Sakuraba et al., the enzyme shows strict specificity for D-glucose. This is Glucokinase from Aeropyrum pernix (strain ATCC 700893 / DSM 11879 / JCM 9820 / NBRC 100138 / K1).